The sequence spans 320 residues: Protein MRH1 (320 aa).

Residues 1-34 (MSTFETLIKRGGNEAIKINPPTGADFHITSRGSD) lie on the Extracellular side of the membrane. The helical transmembrane segment at 35 to 55 (WFWTCFCCYLLFGLILTFLMF) threads the bilayer. The Cytoplasmic segment spans residues 56–62 (RKPVNDR). The helical transmembrane segment at 63–83 (FFYLTGIAPNFFMCIAYFTMA) threads the bilayer. At 84 to 116 (SNLGWIPVKAKYNHVQTSTQKEHPGYRQIFYSR) the chain is on the extracellular side. A helical transmembrane segment spans residues 117–137 (FVGWFLALPWPIIQICMLAGT). Over 138-141 (PFWQ) the chain is Cytoplasmic. A helical membrane pass occupies residues 142 to 162 (MAFNVCITEFFTVCWLIAACV). The Extracellular portion of the chain corresponds to 163-167 (HSTYK). A helical transmembrane segment spans residues 168–188 (WGYYTIGLGAAIVVSISVMTT). The Cytoplasmic segment spans residues 189–204 (SYNLVKQRDNDIRLTF). The chain crosses the membrane as a helical span at residues 205 to 225 (LVFFSIIMFLWIIAYPTCFGI). At 226-238 (TDGGNVLQPDSAG) the chain is on the extracellular side. Residues 239 to 259 (IFYGIIDLILMCFIPTLLVPI) traverse the membrane as a helical segment. Over 260 to 320 (ANHFGADKLG…KSKKSKKSEE (61 aa)) the chain is Cytoplasmic. Residues 285-320 (APVASPRPAATPNLSKDKKKKSKKSKKSKKSKKSEE) form a disordered region. At S289 the chain carries Phosphoserine. Phosphothreonine is present on T295. Residue S299 is modified to Phosphoserine. Residues 301 to 320 (DKKKKSKKSKKSKKSKKSEE) show a composition bias toward basic residues.

This sequence belongs to the archaeal/bacterial/fungal opsin family.

The protein resides in the cell membrane. The protein localises to the mitochondrion. Its subcellular location is the bud. The sequence is that of Protein MRH1 (MRH1) from Saccharomyces cerevisiae (strain ATCC 204508 / S288c) (Baker's yeast).